We begin with the raw amino-acid sequence, 74 residues long: Anaphase-promoting complex subunit 13 (74 aa).

Positions 33 to 53 are disordered; it reads LNELPDPEQDNGGTTESVKEQ.

It belongs to the APC13 family. The mammalian APC/C is composed at least of 14 distinct subunits ANAPC1, ANAPC2, CDC27/APC3, ANAPC4, ANAPC5, CDC16/APC6, ANAPC7, CDC23/APC8, ANAPC10, ANAPC11, CDC26/APC12, ANAPC13, ANAPC15 and ANAPC16 that assemble into a complex of at least 19 chains with a combined molecular mass of around 1.2 MDa; APC/C interacts with FZR1 and FBXO5.

It is found in the nucleus. Its pathway is protein modification; protein ubiquitination. Functionally, component of the anaphase promoting complex/cyclosome (APC/C), a cell cycle-regulated E3 ubiquitin ligase that controls progression through mitosis and the G1 phase of the cell cycle. The APC/C complex acts by mediating ubiquitination and subsequent degradation of target proteins: it mainly mediates the formation of 'Lys-11'-linked polyubiquitin chains and, to a lower extent, the formation of 'Lys-48'- and 'Lys-63'-linked polyubiquitin chains. The APC/C complex catalyzes assembly of branched 'Lys-11'-/'Lys-48'-linked branched ubiquitin chains on target proteins. The sequence is that of Anaphase-promoting complex subunit 13 (ANAPC13) from Pongo abelii (Sumatran orangutan).